The chain runs to 269 residues: Tryptophan synthase alpha chain (269 aa).

Catalysis depends on proton acceptor residues Glu-49 and Asp-60.

It belongs to the TrpA family. In terms of assembly, tetramer of two alpha and two beta chains.

It carries out the reaction (1S,2R)-1-C-(indol-3-yl)glycerol 3-phosphate + L-serine = D-glyceraldehyde 3-phosphate + L-tryptophan + H2O. It functions in the pathway amino-acid biosynthesis; L-tryptophan biosynthesis; L-tryptophan from chorismate: step 5/5. Its function is as follows. The alpha subunit is responsible for the aldol cleavage of indoleglycerol phosphate to indole and glyceraldehyde 3-phosphate. This Azotobacter vinelandii (strain DJ / ATCC BAA-1303) protein is Tryptophan synthase alpha chain.